Here is a 141-residue protein sequence, read N- to C-terminus: uncharacterized protein (141 aa).

Its subcellular location is the mitochondrion. This is an uncharacterized protein from Arabidopsis thaliana (Mouse-ear cress).